A 98-amino-acid chain; its full sequence is Feather beta keratin (98 aa).

S2 is modified (N-acetylserine).

Belongs to the avian keratin family. The avian keratins (F-ker, S-ker, C-ker and B-ker) are a complex mixture of very similar polypeptides.

The polypeptide is Feather beta keratin (Mycteria americana (Wood stork)).